A 231-amino-acid chain; its full sequence is Protein INCA1 (231 aa).

The tract at residues 75-99 (SLHPLEGLPPPEKLWRRKRKKLHLE) is interaction with CCNA1 and CCNA1/CDK2 complex; essential for CDK2 inhibitory activity. The Nuclear localization signal motif lies at 90-95 (RRKRKK). Residue T180 is modified to Phosphothreonine.

It belongs to the INCA family. As to quaternary structure, interacts with CCNA1. Identified in a complex with CCNA1 and CDK2. Interacts with ZNF16; the interaction inhibits INCA1 activity and induces the cell cycle process. Interacts with SPACA9. Interacts with CCNA2, CCNB1 and CCNE1. Interacts with the CCNA1/CDK2 complex. Interacts with ING5, DAZAP2, RNF26, USP15, SPOUT1, DPH7, TRIM26 and RAB5C. In terms of processing, phosphorylated when part of a complex with CCNA1 and CDK2.

The protein localises to the nucleus. It localises to the cytoplasm. Functionally, binds to CDK2-bound cyclins and inhibits the kinase activity of CDK2; binding to cyclins is critical for its function as CDK inhibitor. Inhibits cell growth and proliferation and may play a role in cell cycle control. Required for ING5-mediated regulation of S-phase progression, enhancement of Fas-induced apoptosis and inhibition of cell growth. The chain is Protein INCA1 (Inca1) from Mus musculus (Mouse).